A 213-amino-acid chain; its full sequence is uncharacterized protein (213 aa).

Residues G53, E74, and D97 each contribute to the S-adenosyl-L-methionine site.

It belongs to the methyltransferase superfamily. YrrT family.

Could be a S-adenosyl-L-methionine-dependent methyltransferase. This is an uncharacterized protein from Bacillus velezensis (strain DSM 23117 / BGSC 10A6 / LMG 26770 / FZB42) (Bacillus amyloliquefaciens subsp. plantarum).